A 400-amino-acid chain; its full sequence is Poly(A) polymerase type 3 (400 aa).

ATP-binding positions include 97–99 (FGS), T106, 110–112 (DID), D164, K225, Y234, and 243–244 (GV). Mg(2+)-binding residues include D110, D112, and D164. Residues 382–390 (GEIINKNKK) carry the Nuclear localization signal motif.

It belongs to the poly(A) polymerase family. As to quaternary structure, monomer. Mg(2+) serves as cofactor. The cofactor is Mn(2+).

The protein resides in the nucleus. It carries out the reaction RNA(n) + ATP = RNA(n)-3'-adenine ribonucleotide + diphosphate. Polymerase that creates the 3'-poly(A) tail of mRNA's. May acquire specificity through interaction with a cleavage and polyadenylation factor (CPSF). The protein is Poly(A) polymerase type 3 of Xenopus laevis (African clawed frog).